The primary structure comprises 239 residues: Retrotransposon Gag-like protein 6 (239 aa).

The stretch at 29 to 69 (LTSLRLTNSALRREASTLRAEKANLTNMLESVMAELTLLRT) forms a coiled coil. Residues 82 to 94 (PISSITSNGTRPM) are compositionally biased toward polar residues. Disordered regions lie at residues 82–106 (PISSITSNGTRPMTTPPTSLPEPFS) and 214–239 (TGPCPVHPASNGTSPAPALPARARNL). Positions 228–239 (PAPALPARARNL) are enriched in low complexity.

The protein belongs to the LDOC1 family.

The polypeptide is Retrotransposon Gag-like protein 6 (Homo sapiens (Human)).